Reading from the N-terminus, the 287-residue chain is 4-hydroxybenzoate octaprenyltransferase (287 aa).

6 helical membrane passes run 41–61 (VSLL…GCAI), 92–112 (VALA…LNAL), 133–153 (FFAI…PMAF), 160–180 (VPLL…AYDT), 197–217 (TSAL…YAVT), and 267–287 (NNWL…AQAF).

This sequence belongs to the UbiA prenyltransferase family. Requires Mg(2+) as cofactor.

It is found in the cell inner membrane. It catalyses the reaction all-trans-octaprenyl diphosphate + 4-hydroxybenzoate = 4-hydroxy-3-(all-trans-octaprenyl)benzoate + diphosphate. It participates in cofactor biosynthesis; ubiquinone biosynthesis. Its function is as follows. Catalyzes the prenylation of para-hydroxybenzoate (PHB) with an all-trans polyprenyl group. Mediates the second step in the final reaction sequence of ubiquinone-8 (UQ-8) biosynthesis, which is the condensation of the polyisoprenoid side chain with PHB, generating the first membrane-bound Q intermediate 3-octaprenyl-4-hydroxybenzoate. The chain is 4-hydroxybenzoate octaprenyltransferase from Paraburkholderia phymatum (strain DSM 17167 / CIP 108236 / LMG 21445 / STM815) (Burkholderia phymatum).